Reading from the N-terminus, the 516-residue chain is Adenine DNA glycosylase (516 aa).

Basic residues predominate over residues 1–23 (MKKLRASVRSHKKQPANHKRRGK). The tract at residues 1–38 (MKKLRASVRSHKKQPANHKRRGKCALSSSQAKPSGLDG) is disordered. Glu105 serves as the catalytic Proton donor/acceptor. Residues Cys261, Cys268, Cys271, and Cys277 each coordinate [4Fe-4S] cluster. A Nudix hydrolase domain is found at 335-467 (PREEYSATCV…AMKKVFRVYE (133 aa)). The Nudix box signature appears at 376 to 398 (VTLEPSGQHQHKALLQELQHWSA). The segment at 474 to 516 (CKGSKRPQVCTPSSRKKPSRGQQVLDRFFQRHIPTHKPNSTTQ) is disordered.

Belongs to the Nth/MutY family. Requires [4Fe-4S] cluster as cofactor. As to expression, expressed in brain, spleen, heart, liver and kidney.

The protein localises to the nucleus. Its subcellular location is the mitochondrion. It carries out the reaction Hydrolyzes free adenine bases from 7,8-dihydro-8-oxoguanine:adenine mismatched double-stranded DNA, leaving an apurinic site.. In terms of biological role, involved in oxidative DNA damage repair. Initiates repair of A*oxoG to C*G by removing the inappropriately paired adenine base from the DNA backbone. Possesses both adenine and 2-OH-A DNA glycosylase activities. The polypeptide is Adenine DNA glycosylase (Mutyh) (Rattus norvegicus (Rat)).